The following is a 292-amino-acid chain: RWD domain-containing protein 2A (292 aa).

The 121-residue stretch at 14 to 134 (LEMEMLFSMF…QWLQDNSASY (121 aa)) folds into the RWD domain.

The polypeptide is RWD domain-containing protein 2A (RWDD2A) (Macaca fascicularis (Crab-eating macaque)).